Consider the following 593-residue polypeptide: Meiosis-specific APC/C activator protein AMA1 (593 aa).

Basic residues predominate over residues 1–11; sequence MATPHLYHRYN. The segment at 1–26 is disordered; that stretch reads MATPHLYHRYNSKSSNKNINSSGNST. Residues 12-25 are compositionally biased toward low complexity; that stretch reads SKSSNKNINSSGNS. The short motif at 29–35 is the C-box element; sequence DRFIPKS. Positions 94-109 are enriched in low complexity; that stretch reads SSISSSSESQVTRSGS. Residues 94–125 form a disordered region; sequence SSISSSSESQVTRSGSARASRNDYSKLTKEQK. Basic and acidic residues predominate over residues 113 to 125; sequence SRNDYSKLTKEQK. WD repeat units follow at residues 226–264, 271–310, 323–364, 388–427, 432–474, and 525–564; these read RNDF…VSIL, EKRD…HSSN, ESFK…FPIK, AQAQ…KPIK, PHKA…LLDE, and PNPL…EEII.

It belongs to the WD repeat CDC20/Fizzy family. As to quaternary structure, interacts with CDC16.

Activator protein that regulates the ubiquitin ligase activity and substrate specificity of the anaphase promoting complex/cyclosome (APC/C). Required for the ubiquitination and subsequent degradation of the B-type cyclin CLB1 by the APC/C complex during meiosis. Required for meiosis I, late meiotic gene expression and spore wall assembly. The sequence is that of Meiosis-specific APC/C activator protein AMA1 (AMA1) from Saccharomyces cerevisiae (strain ATCC 204508 / S288c) (Baker's yeast).